The chain runs to 428 residues: Patatin-like protein 3 (428 aa).

The 215-residue stretch at 38–252 folds into the PNPLA domain; it reads LSIDGGGIRG…AANNPTLCAI (215 aa). The short motif at 42 to 47 is the GXGXXG element; the sequence is GGGIRG. Residues 80–84 carry the GXSXG motif; the sequence is GTSTG. The Nucleophile role is filled by serine 82. Catalysis depends on aspartate 239, which acts as the Proton acceptor. Residues 239-241 carry the DGA/G motif; it reads DGG. Serine 423 carries the phosphoserine modification.

Belongs to the patatin family. In terms of tissue distribution, expressed specifically in the stigma, ovary and funiculus of the ovary.

It localises to the cytoplasm. In terms of biological role, possesses non-specific lipolytic acyl hydrolase (LAH) activity. Catalyzes the hydrolysis of the neutral lipids monogalactosyldiacylglycerol (MGDG), digalactosyldiacylglycerol (DGDG) and phosphatidylglycerol (PG), and less efficiently the polar lipids phosphatidylcholine (PC) and phosphatidylinositol (PI), but not the storage lipid triacylglycerol (TAG). May play a role in root development. This chain is Patatin-like protein 3 (PLP3), found in Arabidopsis thaliana (Mouse-ear cress).